The following is a 1029-amino-acid chain: U2 snRNP-associated SURP motif-containing protein (1029 aa).

Disordered regions lie at residues 1–111 (MADK…EDEK) and 141–274 (VNAA…PSTT). A2 bears the N-acetylalanine mark. The span at 7–16 (GGSQKASSKT) shows a compositional bias: polar residues. The span at 45–54 (TRPKSPRKHN) shows a compositional bias: basic residues. The segment covering 55–64 (YRNESARESL) has biased composition (basic and acidic residues). A Phosphoserine modification is found at S67. K80 is covalently cross-linked (Glycyl lysine isopeptide (Lys-Gly) (interchain with G-Cter in SUMO2)). The stretch at 92 to 121 (AKRTLSKKEQEELKKKEDEKAAAEIYEEFL) forms a coiled coil. Composition is skewed to basic and acidic residues over residues 97 to 111 (SKKE…EDEK) and 144 to 155 (AKEEHETDEKRG). Residues K145 and K168 each participate in a glycyl lysine isopeptide (Lys-Gly) (interchain with G-Cter in SUMO2) cross-link. The segment covering 169 to 178 (NPPNQSSNER) has biased composition (polar residues). The segment covering 186-222 (ETKKPPLKKGEKEKKKSNLELFKEELKQIQEERDERH) has biased composition (basic and acidic residues). Residues 192–232 (LKKGEKEKKKSNLELFKEELKQIQEERDERHKTKGRLSRFE) are a coiled coil. S202 is subject to Phosphoserine. A Glycyl lysine isopeptide (Lys-Gly) (interchain with G-Cter in SUMO2) cross-link involves residue K208. Position 236 is a phosphoserine (S236). Residues 239 to 249 (DGQRRSMDAPS) are compositionally biased toward basic and acidic residues. The RRM domain maps to 274–355 (TNLYLGNINP…FEMKLGWGKA (82 aa)). Residues 430 to 473 (LIHRMIEFVVREGPMFEAMIMNREINNPMFRFLFENQTPAHVYY) form an SURP motif repeat. The residue at position 485 (S485) is a Phosphoserine. The 146-residue stretch at 534–679 (LKEEQRDKLE…KLQNIFLGLV (146 aa)) folds into the CID domain. T719 bears the Phosphothreonine mark. Residues K748 and K749 each participate in a glycyl lysine isopeptide (Lys-Gly) (interchain with G-Cter in SUMO2) cross-link. Position 760 is an N6-acetyllysine; alternate (K760). Residue K760 forms a Glycyl lysine isopeptide (Lys-Gly) (interchain with G-Cter in SUMO2); alternate linkage. Disordered regions lie at residues 778–841 (KWEL…EEKR) and 855–1029 (QDEL…KNKH). Acidic residues predominate over residues 786-806 (EESEEEENQNQEEESEDEEDT). Phosphoserine is present on residues S788, S800, and S811. Basic and acidic residues-rich tracts occupy residues 810-841 (KSEE…EEKR) and 874-922 (QVEH…TPTR). Residues K822, K829, and K832 each participate in a glycyl lysine isopeptide (Lys-Gly) (interchain with G-Cter in SUMO2) cross-link. Residues 837-915 (SEEKRAKLRE…ESRSKDKKEK (79 aa)) adopt a coiled-coil conformation. Position 931 is a phosphothreonine (T931). Phosphoserine occurs at positions 946 and 948. The segment covering 950–980 (KSERSERSERSHKESSRSRSSHKDSPRDVSK) has biased composition (basic and acidic residues). Basic residues predominate over residues 991 to 1029 (TPKRSRRSRSRSPKKSGKKSRSQSRSPHRSHKKSKKNKH).

This sequence belongs to the splicing factor SR family. In terms of assembly, interacts with ERBB4.

The protein localises to the nucleus. The protein is U2 snRNP-associated SURP motif-containing protein (U2SURP) of Homo sapiens (Human).